Here is a 206-residue protein sequence, read N- to C-terminus: MEFNVKTLEGKDAGKVSLSDAIFGLEPREDILARVIRWQLAKKQQGTHKAKGRAEVSRTGAKMYKQKGTGRARHHSARAPQFRGGGKAHGPVVRSHEHDLPKKVRALGLRHALSAKIKADDVIVIDNLVAAEAKTKSLASVFETLGLTNALFIGGAELDGNFKLAAQNIPNIDVLPIQGINVYDIVRRGKLVLSKAAVEALEERFK.

The interval 63–97 (MYKQKGTGRARHHSARAPQFRGGGKAHGPVVRSHE) is disordered. The span at 64 to 77 (YKQKGTGRARHHSA) shows a compositional bias: basic residues.

It belongs to the universal ribosomal protein uL4 family. Part of the 50S ribosomal subunit.

One of the primary rRNA binding proteins, this protein initially binds near the 5'-end of the 23S rRNA. It is important during the early stages of 50S assembly. It makes multiple contacts with different domains of the 23S rRNA in the assembled 50S subunit and ribosome. In terms of biological role, forms part of the polypeptide exit tunnel. The chain is Large ribosomal subunit protein uL4 from Rhizobium johnstonii (strain DSM 114642 / LMG 32736 / 3841) (Rhizobium leguminosarum bv. viciae).